A 1955-amino-acid chain; its full sequence is Rootletin (1955 aa).

5 coiled-coil regions span residues 29–58 (EENR…ESIE), 162–223 (EENL…QQHT), 284–1303 (LMRK…AVES), 1368–1579 (VGVT…EELR), and 1607–1863 (RRWE…RTKG). Disordered stretches follow at residues 321–341 (VTEN…DLKR), 391–451 (LTTK…KKLD), 504–551 (LKER…RSLK), 907–935 (EKLN…NEAV), and 961–998 (RDLE…QKTL). Basic and acidic residues-rich tracts occupy residues 326-341 (MKSE…DLKR) and 396-451 (GEID…KKLD). Basic and acidic residues-rich tracts occupy residues 907–931 (EKLN…ESSK), 961–982 (RDLE…KMEL), and 989–998 (EDRKKEQKTL).

Belongs to the rootletin family. As to expression, expressed in head ciliated neurons.

The protein localises to the cytoplasm. It is found in the cytoskeleton. Its subcellular location is the cilium basal body. It localises to the cilium axoneme. Its function is as follows. Major structural component of the ciliary rootlet, a cytoskeletal-like structure in ciliated cells which originates from the basal body at the proximal end of a cilium and extends proximally toward the cell nucleus. Required for cilia integrity and function in sensory neurons. Maintains cilia integrity, partly by modulating the assembly and transport of intraflagellar proteins along the ciliary axoneme. Required for normal mating behavior and normal responses to environmental and chemical stimuli. In Caenorhabditis elegans, this protein is Rootletin.